Reading from the N-terminus, the 281-residue chain is uncharacterized protein (281 aa).

The tract at residues 1–30 is disordered; the sequence is MVQIQFHQGEPLGHKKEKPPPVSPPSPPPI. Over residues 20-30 the composition is skewed to pro residues; sequence PPVSPPSPPPI. Transmembrane regions (helical) follow at residues 58–78, 88–107, 117–137, 145–165, 171–191, 196–216, and 248–268; these read TVVF…LIPW, TLPF…AYWL, MLVM…GLCF, AYVL…LMAW, LAIL…IAVQ, YQRI…IVLI, and VIMF…PNYA.

This sequence belongs to the cytomegalovirus US12 family.

It is found in the host membrane. This is an uncharacterized protein from Homo sapiens (Human).